Here is a 603-residue protein sequence, read N- to C-terminus: Protein SHORT-ROOT 2 (603 aa).

Disordered stretches follow at residues 11–58 and 106–140; these read HHHH…HSHS and DFSSSSSSRQFHSGTGAPSSAPVPPPPSATTSSAG. Over residues 31 to 44 the composition is skewed to low complexity; that stretch reads SYPSSRGSTSSPSS. Residues 45–58 show a composition bias toward basic residues; it reads HHTHNHTYYHHSHS. A compositionally biased stretch (low complexity) spans 108-125; that stretch reads SSSSSSRQFHSGTGAPSS. In terms of domain architecture, GRAS spans 179–602; that stretch reads AAPSSSGRWA…QPVVWASAWK (424 aa). Residues 186–249 form a leucine repeat I (LRI) region; sequence RWAAQLLMEC…LTTSGPRTLR (64 aa). The segment at 268-354 is VHIID; the sequence is ALKFQELSPW…DTPHLSITTV (87 aa). The VHIID signature appears at 318–322; that stretch reads LHILD. The leucine repeat II (LRII) stretch occupies residues 370–406; the sequence is EIGQRLEKFARLMGVPFSFRAVHHAGDLADLDLAALD. The tract at residues 416–514 is PFYRE; it reads LAVNCVNALR…ERAVGRAIVD (99 aa). The segment at 517–602 is SAW; sequence SCPASQSAER…QPVVWASAWK (86 aa).

The protein belongs to the GRAS family. Does not interact with SCR1.

It localises to the nucleus. Its function is as follows. Putative transcription factor involved in asymmetric cell division. The polypeptide is Protein SHORT-ROOT 2 (SHR2) (Oryza sativa subsp. indica (Rice)).